The sequence spans 395 residues: S-adenosylmethionine synthase (395 aa).

His-16 contacts ATP. Mg(2+) is bound at residue Asp-18. Glu-44 serves as a coordination point for K(+). L-methionine is bound by residues Glu-57 and Gln-100. A flexible loop region spans residues 100–110; that stretch reads QSPDIAQGVDR. Residues 167 to 169, 233 to 234, Asp-242, 248 to 249, Ala-265, and Lys-269 contribute to the ATP site; these read DAK, RF, and RK. Asp-242 serves as a coordination point for L-methionine. Lys-273 contributes to the L-methionine binding site.

Belongs to the AdoMet synthase family. Homotetramer; dimer of dimers. Requires Mg(2+) as cofactor. It depends on K(+) as a cofactor.

Its subcellular location is the cytoplasm. It catalyses the reaction L-methionine + ATP + H2O = S-adenosyl-L-methionine + phosphate + diphosphate. It participates in amino-acid biosynthesis; S-adenosyl-L-methionine biosynthesis; S-adenosyl-L-methionine from L-methionine: step 1/1. Its function is as follows. Catalyzes the formation of S-adenosylmethionine (AdoMet) from methionine and ATP. The overall synthetic reaction is composed of two sequential steps, AdoMet formation and the subsequent tripolyphosphate hydrolysis which occurs prior to release of AdoMet from the enzyme. This Burkholderia cenocepacia (strain HI2424) protein is S-adenosylmethionine synthase.